A 417-amino-acid polypeptide reads, in one-letter code: Gamma-glutamyl phosphate reductase (417 aa).

This sequence belongs to the gamma-glutamyl phosphate reductase family.

The protein localises to the cytoplasm. It catalyses the reaction L-glutamate 5-semialdehyde + phosphate + NADP(+) = L-glutamyl 5-phosphate + NADPH + H(+). Its pathway is amino-acid biosynthesis; L-proline biosynthesis; L-glutamate 5-semialdehyde from L-glutamate: step 2/2. Functionally, catalyzes the NADPH-dependent reduction of L-glutamate 5-phosphate into L-glutamate 5-semialdehyde and phosphate. The product spontaneously undergoes cyclization to form 1-pyrroline-5-carboxylate. The sequence is that of Gamma-glutamyl phosphate reductase from Proteus mirabilis (strain HI4320).